Consider the following 363-residue polypeptide: 3-isopropylmalate dehydrogenase (363 aa).

Position 78–91 (78–91) interacts with NAD(+); the sequence is GPKWEHLPPDQQPE. Positions 99, 109, 138, and 227 each coordinate substrate. Positions 227, 251, and 255 each coordinate Mg(2+). 285–297 contacts NAD(+); it reads GSAPDIAGKNIAN.

This sequence belongs to the isocitrate and isopropylmalate dehydrogenases family. LeuB type 1 subfamily. Homodimer. Requires Mg(2+) as cofactor. It depends on Mn(2+) as a cofactor.

It is found in the cytoplasm. It carries out the reaction (2R,3S)-3-isopropylmalate + NAD(+) = 4-methyl-2-oxopentanoate + CO2 + NADH. The protein operates within amino-acid biosynthesis; L-leucine biosynthesis; L-leucine from 3-methyl-2-oxobutanoate: step 3/4. Catalyzes the oxidation of 3-carboxy-2-hydroxy-4-methylpentanoate (3-isopropylmalate) to 3-carboxy-4-methyl-2-oxopentanoate. The product decarboxylates to 4-methyl-2 oxopentanoate. The sequence is that of 3-isopropylmalate dehydrogenase from Shigella flexneri.